The sequence spans 169 residues: IPEKPFICTECGKCFSEKRTLKHHIRTHTGEKPFICTDCGKCFSFEICLNRHYKTHTRERPFICTECGKSFSDKSRLRVHHRSHTGEKPFTCTDCGKCFSVKSILNHHRQAIHSGEKPFICTECGKGFASKHYLHGHKRTHTGEKPFVCTECGKGFASNYYLHVHKRTH.

6 C2H2-type zinc fingers span residues 6 to 28 (FICT…IRTH), 34 to 56 (FICT…YKTH), 62 to 84 (FICT…HRSH), 90 to 113 (FTCT…QAIH), 119 to 141 (FICT…KRTH), and 147 to 169 (FVCT…KRTH).

This sequence belongs to the krueppel C2H2-type zinc-finger protein family.

It localises to the nucleus. May be involved in transcriptional regulation. This Xenopus laevis (African clawed frog) protein is Gastrula zinc finger protein XlCGF62.1.